The chain runs to 1132 residues: Phycobiliprotein ApcE (1132 aa).

Cys-196 lines the (2R,3E)-phycocyanobilin pocket. 4 PBS-linker domains span residues 253–433 (DQQG…FRKV), 514–692 (LGPK…EKQE), 709–887 (PDID…KQNN), and 940–1121 (GRGQ…SSLS).

Belongs to the phycobilisome linker protein family. In terms of assembly, heterodimer of ApcF (a variant beta-allophycocyanin). Phycobilisomes of this organism are composed of a two cylinder core, from which six rods radiate. The core is mainly composed of allophycocyanin alpha and beta chains and of minor components. In terms of processing, contains one covalently linked bilin chromophore. This protein autochromophorylates.

The protein localises to the cellular thylakoid membrane. Its function is as follows. This protein is postulated to act both as terminal energy acceptor (by its phycobilin-like domains) and as a linker polypeptide (by its repeats and arms) that stabilizes the phycobilisome core architecture. Has intrinsic bilin lyase activity. The polypeptide is Phycobiliprotein ApcE (apcE) (Nostoc sp. (strain PCC 7120 / SAG 25.82 / UTEX 2576)).